The sequence spans 120 residues: Large ribosomal subunit protein uL18 (120 aa).

Belongs to the universal ribosomal protein uL18 family. In terms of assembly, part of the 50S ribosomal subunit; part of the 5S rRNA/L5/L18/L25 subcomplex. Contacts the 5S and 23S rRNAs.

Its function is as follows. This is one of the proteins that bind and probably mediate the attachment of the 5S RNA into the large ribosomal subunit, where it forms part of the central protuberance. The protein is Large ribosomal subunit protein uL18 of Bacillus cereus (strain ATCC 10987 / NRS 248).